The sequence spans 281 residues: Large ribosomal subunit protein uL2 (281 aa).

Residues 223–281 (VRGSVMNPVDHPHGGGEGKQPVGRKSPLTPWGKIALGVKTRKTKKSSNKLILRRRKDAK) are disordered. The span at 261–281 (KTRKTKKSSNKLILRRRKDAK) shows a compositional bias: basic residues.

This sequence belongs to the universal ribosomal protein uL2 family. As to quaternary structure, part of the 50S ribosomal subunit. Forms a bridge to the 30S subunit in the 70S ribosome.

Functionally, one of the primary rRNA binding proteins. Required for association of the 30S and 50S subunits to form the 70S ribosome, for tRNA binding and peptide bond formation. It has been suggested to have peptidyltransferase activity; this is somewhat controversial. Makes several contacts with the 16S rRNA in the 70S ribosome. The chain is Large ribosomal subunit protein uL2 from Mycoplasmopsis synoviae (strain 53) (Mycoplasma synoviae).